Here is a 626-residue protein sequence, read N- to C-terminus: Grainyhead-like protein 3 homolog (626 aa).

Positions 30–95 (EAWKTYLENP…QGKRYYHGME (66 aa)) are transcription activation. Residues 226–460 (SLKSDFEYTL…DLETPPVLFI (235 aa)) form the Grh/CP2 DB domain.

It belongs to the grh/CP2 family. Grainyhead subfamily. In terms of assembly, homodimer, also forms heterodimers with GRHL1 and GRHL2. Interacts with LMO4. In terms of tissue distribution, expressed in brain, colon, pancreas, placenta and kidney. Isoform 1 is expressed in lung and tonsil. Isoform 2 is prostate-specific.

Its subcellular location is the nucleus. Functionally, transcription factor playing important roles in primary neurulation and in the differentiation of stratified epithelia of both ectodermal and endodermal origin. Binds directly to the consensus DNA sequence 5'-AACCGGTT-3' acting as an activator and repressor on distinct target genes. xhibits functional redundancy with GRHL2 in epidermal morphogenetic events and epidermal wound repair. Exhibits functional redundancy with GRHL2 in epidermal morphogenetic events and epidermal wound repair but is essential to form the epidermal barrier with TGM3 as critical direct target gene among others. Despite being dispensable during normal epidermal homeostasis in the adulthood, is again required for barrier repair after immune-mediated epidermal damage, regulates distinct gene batteries in embryonic epidermal differentiation and adult epidermal barrier reformation after injury. Plays unique and cooperative roles with GRHL2 in establishing distinct zones of primary neurulation. Essential for spinal closure, functions cooperatively with GRHL2 in closure 2 (forebrain/midbrain boundary) and posterior neuropore closure. Also required for proper development of the oral periderm. No genetic interaction with GRHL3, no functional cooperativity due to diverse target gene selectivity. The protein is Grainyhead-like protein 3 homolog of Homo sapiens (Human).